Consider the following 352-residue polypeptide: Secreted RxLR effector protein 122 (352 aa).

Residues 1–21 (MRGAYYVLIALLVVASSQTSA) form the signal peptide. Positions 48-65 (QFLRGSRNVPGDLAHEER) match the RxLR-dEER motif. The segment covering 280 to 290 (RGGTTGASRGT) has biased composition (low complexity). Residues 280–352 (RGGTTGASRG…VEPEGHRSKP (73 aa)) form a disordered region. The segment covering 302 to 315 (AASTSKGKSSVFTE) has biased composition (polar residues).

It belongs to the RxLR effector family.

It localises to the secreted. The protein resides in the host nucleus. Secreted effector that acts as an elicitor that induces cell death in host plant cells. The chain is Secreted RxLR effector protein 122 from Plasmopara viticola (Downy mildew of grapevine).